The following is a 1121-amino-acid chain: Brassinosteroid LRR receptor kinase BRI1 (1121 aa).

An N-terminal signal peptide occupies residues 1 to 24 (MDSLWAAIAALFVAAAVVVRGAAA). Residues 54–61 (CRFPGAGC) carry the Cys pair 1 motif. 17 LRR repeats span residues 90-114 (LGSV…GGAR), 116-142 (GSKL…ALAS), 144-167 (CGGL…GGGG), 170-193 (FAGL…RWMV), 197-221 (VGAV…NCSG), 223-243 (QYLD…ALSD), 244-268 (CRGL…IAGL), 269-292 (TSLN…AFAK), 294-317 (QQLT…VASL), 318-341 (PELQ…LCQD), 343-367 (NSKL…VSNC), 369-391 (SLVS…LGDL), 392-415 (GNLQ…LSRI), 416-439 (QGLE…LAKC), 441-463 (KLNW…LGKL), 464-487 (SYLA…LGDC), and 489-511 (SLVW…LAKQ). Asn102 is a glycosylation site (N-linked (GlcNAc...) asparagine). Asn151 carries an N-linked (GlcNAc...) asparagine glycan. Asn218 carries an N-linked (GlcNAc...) asparagine glycan. 4 N-linked (GlcNAc...) asparagine glycosylation sites follow: Asn251, Asn275, Asn280, and Asn307. N-linked (GlcNAc...) asparagine glycosylation is found at Asn366 and Asn381. Residues Asn473 and Asn501 are each glycosylated (N-linked (GlcNAc...) asparagine). Tyr525 contacts brassinolide. One copy of the LRR 18 repeat lies at 541-564 (GSLLEFTSIRPDDLSRMPSKKLCN). Asn564 carries an N-linked (GlcNAc...) asparagine glycan. Brassinolide is bound at residue Tyr569. An N-linked (GlcNAc...) asparagine glycan is attached at Asn580. LRR repeat units lie at residues 580-603 (NGSM…ELGD), 604-628 (MFYL…LAEA), 629-651 (KKLA…SFSA), and 652-676 (LSLS…SLAT). N-linked (GlcNAc...) asparagine glycosylation is found at Asn658, Asn665, and Asn684. The Cys pair 2 signature appears at 689–696 (CGFPLPPC). Positions 693–712 (LPPCDHSSPRSSNDHQSHRR) are disordered. The chain crosses the membrane as a helical span at residues 719-739 (SIAMGLLFSLFCIIVIIIAIG). The Protein kinase domain maps to 807 to 1083 (FHIACQIGSG…LKVMAMFKEI (277 aa)). ATP is bound by residues 813–821 (IGSGGFGDV), Lys835, 881–883 (DYM), 887–890 (SLED), 933–938 (DMKSSN), and Asp951. Asp933 acts as the Proton acceptor in catalysis.

It belongs to the protein kinase superfamily. Ser/Thr protein kinase family. As to quaternary structure, interacts with BIP103 and BIP131. Interacts with BAK1. Interacts with BSK3. Interacts with SERK2. Highly expressed in shoots. Expressed at low levels in roots.

The protein resides in the cell membrane. The enzyme catalyses L-seryl-[protein] + ATP = O-phospho-L-seryl-[protein] + ADP + H(+). It catalyses the reaction L-threonyl-[protein] + ATP = O-phospho-L-threonyl-[protein] + ADP + H(+). Receptor kinase involved brassinosteroid (BR) signal transduction. Regulates, in response to BR binding, a signaling cascade involved in plant development, promotion of cell elongation and flowering. Activates BR signaling by targeting and phosphorylating BSK3, a positive regulator of BR signaling. Forms at the plasma membrane a receptor complex with BAK1 which is activated in response to brassinolide. Phosphorylates BAK1. Phosphorylates REM4.1, which reduces REM4.1 binding affinity to BAK1 and allows the formation and subsequent activation of the BRI1-BAK1 receptor complex. Functions in various growth and developmental processes, such as internode elongation, bending of the lamina joint and skotomorphogenesis. Functions in internode elongation by inducing the formation of the intercalary meristem and the longitudinal elongation of internode cells. Involved in organ development through the control of cell division and elongation. Does not seem essential for organ pattern formation or organ initiation. The sequence is that of Brassinosteroid LRR receptor kinase BRI1 from Oryza sativa subsp. japonica (Rice).